The sequence spans 483 residues: ATP synthase subunit beta (483 aa).

Position 162–169 (162–169 (GGAGVGKT)) interacts with ATP.

The protein belongs to the ATPase alpha/beta chains family. F-type ATPases have 2 components, CF(1) - the catalytic core - and CF(0) - the membrane proton channel. CF(1) has five subunits: alpha(3), beta(3), gamma(1), delta(1), epsilon(1). CF(0) has four main subunits: a(1), b(1), b'(1) and c(9-12).

It localises to the cellular thylakoid membrane. It carries out the reaction ATP + H2O + 4 H(+)(in) = ADP + phosphate + 5 H(+)(out). Its function is as follows. Produces ATP from ADP in the presence of a proton gradient across the membrane. The catalytic sites are hosted primarily by the beta subunits. In Synechocystis sp. (strain ATCC 27184 / PCC 6803 / Kazusa), this protein is ATP synthase subunit beta.